Reading from the N-terminus, the 443-residue chain is ATP-dependent protease ATPase subunit HslU (443 aa).

Residues isoleucine 18, 60 to 65 (GVGKTE), aspartate 256, glutamate 321, and arginine 393 contribute to the ATP site.

It belongs to the ClpX chaperone family. HslU subfamily. As to quaternary structure, a double ring-shaped homohexamer of HslV is capped on each side by a ring-shaped HslU homohexamer. The assembly of the HslU/HslV complex is dependent on binding of ATP.

The protein resides in the cytoplasm. In terms of biological role, ATPase subunit of a proteasome-like degradation complex; this subunit has chaperone activity. The binding of ATP and its subsequent hydrolysis by HslU are essential for unfolding of protein substrates subsequently hydrolyzed by HslV. HslU recognizes the N-terminal part of its protein substrates and unfolds these before they are guided to HslV for hydrolysis. The chain is ATP-dependent protease ATPase subunit HslU from Photorhabdus laumondii subsp. laumondii (strain DSM 15139 / CIP 105565 / TT01) (Photorhabdus luminescens subsp. laumondii).